The primary structure comprises 222 residues: Sperm acrosome-associated protein 9 (222 aa).

The tract at residues 164–222 (QHVSEPQAHQESTRGAARPAQAIGTQPRATKHKCRQLTKASLKPRGCSKPPWRPPGGKL) is disordered.

As to quaternary structure, microtubule inner protein component of sperm flagellar doublet microtubules. Interacts with CABP1 and CALR. Interacts with INCA1. Interacts with microtubules.

The protein localises to the cytoplasm. The protein resides in the cytoplasmic vesicle. It localises to the secretory vesicle. Its subcellular location is the acrosome. It is found in the cytoskeleton. The protein localises to the cilium basal body. The protein resides in the flagellum axoneme. It localises to the cilium axoneme. Its subcellular location is the nucleus. Its function is as follows. Microtubule inner protein (MIP) part of the dynein-decorated doublet microtubules (DMTs) of multiciliated respiratory cells and the distal singlet microtubules of monoflagellated spermatozoa. Forms an extensive interaction network cross-linking the lumen of axonemal doublet microtubules. The protein is Sperm acrosome-associated protein 9 of Homo sapiens (Human).